The sequence spans 456 residues: Glycerol-3-phosphate acyltransferase 4 (456 aa).

The signal sequence occupies residues 1–37; the sequence is MFLLLPFDSLIVNLLGISLTVLFTLLLVFIIVPAIFG. Transmembrane regions (helical) follow at residues 156-176 and 180-200; these read ISLRLTILWGLGVLIRYCFLL and IALAFTGIGLLVVGTTMVGYL. N247 carries N-linked (GlcNAc...) asparagine glycosylation. The HXXXXD motif signature appears at 248-253; sequence HTSPID. N327, N328, and N362 each carry an N-linked (GlcNAc...) asparagine glycan.

It belongs to the 1-acyl-sn-glycerol-3-phosphate acyltransferase family. Highly expressed in testis.

It is found in the endoplasmic reticulum membrane. The enzyme catalyses sn-glycerol 3-phosphate + an acyl-CoA = a 1-acyl-sn-glycero-3-phosphate + CoA. It catalyses the reaction dodecanoyl-CoA + sn-glycerol 3-phosphate = 1-dodecanoyl-sn-glycerol 3-phosphate + CoA. It carries out the reaction sn-glycerol 3-phosphate + hexadecanoyl-CoA = 1-hexadecanoyl-sn-glycero-3-phosphate + CoA. The catalysed reaction is sn-glycerol 3-phosphate + octadecanoyl-CoA = 1-octadecanoyl-sn-glycero-3-phosphate + CoA. The enzyme catalyses sn-glycerol 3-phosphate + (9Z)-octadecenoyl-CoA = 1-(9Z-octadecenoyl)-sn-glycero-3-phosphate + CoA. It catalyses the reaction (9Z,12Z)-octadecadienoyl-CoA + sn-glycerol 3-phosphate = 1-(9Z,12Z)-octadecadienoyl-sn-glycero-3-phosphate + CoA. It participates in phospholipid metabolism; CDP-diacylglycerol biosynthesis; CDP-diacylglycerol from sn-glycerol 3-phosphate: step 1/3. In terms of biological role, converts glycerol-3-phosphate to 1-acyl-sn-glycerol-3-phosphate (lysophosphatidic acid or LPA) by incorporating an acyl moiety at the sn-1 position of the glycerol backbone. Active against both saturated and unsaturated long-chain fatty acyl-CoAs. Protects cells against lipotoxicity. This Mus musculus (Mouse) protein is Glycerol-3-phosphate acyltransferase 4.